The following is a 488-amino-acid chain: Glutamyl-tRNA(Gln) amidotransferase subunit A (488 aa).

Active-site charge relay system residues include K78 and S153. The active-site Acyl-ester intermediate is S177.

It belongs to the amidase family. GatA subfamily. Heterotrimer of A, B and C subunits.

The catalysed reaction is L-glutamyl-tRNA(Gln) + L-glutamine + ATP + H2O = L-glutaminyl-tRNA(Gln) + L-glutamate + ADP + phosphate + H(+). Allows the formation of correctly charged Gln-tRNA(Gln) through the transamidation of misacylated Glu-tRNA(Gln) in organisms which lack glutaminyl-tRNA synthetase. The reaction takes place in the presence of glutamine and ATP through an activated gamma-phospho-Glu-tRNA(Gln). The protein is Glutamyl-tRNA(Gln) amidotransferase subunit A of Caldanaerobacter subterraneus subsp. tengcongensis (strain DSM 15242 / JCM 11007 / NBRC 100824 / MB4) (Thermoanaerobacter tengcongensis).